An 891-amino-acid polypeptide reads, in one-letter code: Translation initiation factor IF-2 (891 aa).

Residues 50-303 are disordered; the sequence is KKEHGSADES…TSMQHGFDKS (254 aa). Basic and acidic residues-rich tracts occupy residues 102 to 237 and 245 to 261; these read TLEE…KTAD and HARE…EQQP. One can recognise a tr-type G domain in the interval 390 to 559; that stretch reads GRAPVVTIMG…LLQSEVLELT (170 aa). Residues 399-406 are G1; that stretch reads GHVDHGKT. GTP is bound at residue 399 to 406; the sequence is GHVDHGKT. The tract at residues 424-428 is G2; sequence GITQH. The tract at residues 445–448 is G3; it reads DTPG. GTP-binding positions include 445 to 449 and 499 to 502; these read DTPGH and NKID. The interval 499–502 is G4; sequence NKID. Positions 535-537 are G5; it reads SAK.

Belongs to the TRAFAC class translation factor GTPase superfamily. Classic translation factor GTPase family. IF-2 subfamily.

Its subcellular location is the cytoplasm. Its function is as follows. One of the essential components for the initiation of protein synthesis. Protects formylmethionyl-tRNA from spontaneous hydrolysis and promotes its binding to the 30S ribosomal subunits. Also involved in the hydrolysis of GTP during the formation of the 70S ribosomal complex. The chain is Translation initiation factor IF-2 from Aliivibrio salmonicida (strain LFI1238) (Vibrio salmonicida (strain LFI1238)).